The sequence spans 1615 residues: Ras-responsive element-binding protein 1 (1615 aa).

Residues methionine 1–lysine 44 are disordered. Residues glycine 15–proline 28 show a composition bias toward polar residues. 3 C2H2-type zinc fingers span residues tyrosine 47 to histidine 69, histidine 78 to histidine 100, and tyrosine 106 to histidine 128. The tract at residues isoleucine 127–alanine 169 is disordered. Positions lysine 145–lysine 154 are enriched in basic residues. 3 consecutive C2H2-type zinc fingers follow at residues tyrosine 189 to histidine 211, leucine 216 to histidine 239, and phenylalanine 297 to histidine 319. The tract at residues serine 511–glutamine 556 is disordered. Residues serine 535–alanine 549 show a composition bias toward polar residues. 4 C2H2-type zinc fingers span residues tyrosine 622–histidine 644, tyrosine 650–histidine 672, threonine 732–histidine 754, and phenylalanine 763–histidine 788. Disordered stretches follow at residues alanine 1025–asparagine 1044, aspartate 1058–glutamate 1104, and lysine 1123–threonine 1162. The segment covering alanine 1026–serine 1036 has biased composition (low complexity). Residues threonine 1082–proline 1095 show a composition bias toward basic residues. Residues lysine 1123–aspartate 1132 are compositionally biased toward polar residues. Residues isoleucine 1170–histidine 1192 form a C2H2-type 11 zinc finger. Disordered stretches follow at residues cysteine 1214–aspartate 1269 and leucine 1313–lysine 1418. Acidic residues predominate over residues proline 1242–serine 1262. Residues histidine 1298 to histidine 1320 form a C2H2-type 12 zinc finger. Basic and acidic residues-rich tracts occupy residues isoleucine 1321–glutamine 1339 and glycine 1388–alanine 1414. 2 C2H2-type zinc fingers span residues lysine 1419 to histidine 1441 and tyrosine 1447 to histidine 1469. Over residues arginine 1464–asparagine 1477 the composition is skewed to basic residues. Residues arginine 1464–isoleucine 1585 form a disordered region. Basic and acidic residues-rich tracts occupy residues histidine 1478–glutamate 1493 and proline 1566–arginine 1580.

This sequence belongs to the krueppel C2H2-type zinc-finger protein family. In terms of tissue distribution, broadly expressed, except in brain.

It is found in the nucleus. Functionally, transcription factor that binds specifically to the RAS-responsive elements (RRE) of gene promoters. In Gallus gallus (Chicken), this protein is Ras-responsive element-binding protein 1 (RREB1).